Consider the following 360-residue polypeptide: Phospho-N-acetylmuramoyl-pentapeptide-transferase (360 aa).

10 consecutive transmembrane segments (helical) span residues 25 to 45 (RAIL…PWVI), 73 to 93 (TMGG…WADL), 97 to 117 (YVLA…VDDY), 132 to 152 (WKYF…FVTA), 168 to 188 (VAWQ…VGFS), 199 to 219 (GLAI…AYLV), 236 to 256 (SGEL…FLWF), 263 to 283 (VFMG…IAVI), 288 to 308 (IVFF…ILQV), and 339 to 359 (IVRF…TLKI).

Belongs to the glycosyltransferase 4 family. MraY subfamily. It depends on Mg(2+) as a cofactor.

The protein resides in the cell inner membrane. It catalyses the reaction UDP-N-acetyl-alpha-D-muramoyl-L-alanyl-gamma-D-glutamyl-meso-2,6-diaminopimeloyl-D-alanyl-D-alanine + di-trans,octa-cis-undecaprenyl phosphate = di-trans,octa-cis-undecaprenyl diphospho-N-acetyl-alpha-D-muramoyl-L-alanyl-D-glutamyl-meso-2,6-diaminopimeloyl-D-alanyl-D-alanine + UMP. It participates in cell wall biogenesis; peptidoglycan biosynthesis. Catalyzes the initial step of the lipid cycle reactions in the biosynthesis of the cell wall peptidoglycan: transfers peptidoglycan precursor phospho-MurNAc-pentapeptide from UDP-MurNAc-pentapeptide onto the lipid carrier undecaprenyl phosphate, yielding undecaprenyl-pyrophosphoryl-MurNAc-pentapeptide, known as lipid I. The polypeptide is Phospho-N-acetylmuramoyl-pentapeptide-transferase (Teredinibacter turnerae (strain ATCC 39867 / T7901)).